The following is a 314-amino-acid chain: MVTSLKGRDFLTLADYSREELLFVLETAKHLKQRYLAGERVIPLLPGRHLAMIFEKSSTRTRISFETAMRELGGDALYLGWKELQLGRGETIEDTARVVSRYVDGIMARVYEHEKLEKLAQYSRVPVINGLSDLLHPAQALTDIYTIMEKKGSDLSKLKIVFIGDGGDNVLHSLMLGIGILGGKIIISSPKGYDPDPRIIKLFEEKAVPNGGEYEIIRDPYEAVRDADVVYTDVWVSMGQEAEKEKRIKDLEPYRVTVELMKHAKSDAVFMHCLPAHRGQEVVDEVIDGKWSIVWDQAENRKHVQKAILALIIP.

Carbamoyl phosphate-binding positions include 58–61 (STRT), Q85, R109, and 136–139 (HPAQ). L-ornithine is bound by residues N169, D233, and 237 to 238 (SM). Residues 273 to 274 (CL) and R301 each bind carbamoyl phosphate.

It belongs to the aspartate/ornithine carbamoyltransferase superfamily. OTCase family.

The protein localises to the cytoplasm. The enzyme catalyses carbamoyl phosphate + L-ornithine = L-citrulline + phosphate + H(+). Its pathway is amino-acid degradation; L-arginine degradation via ADI pathway; carbamoyl phosphate from L-arginine: step 2/2. Its function is as follows. Reversibly catalyzes the transfer of the carbamoyl group from carbamoyl phosphate (CP) to the N(epsilon) atom of ornithine (ORN) to produce L-citrulline. This Staphylothermus marinus (strain ATCC 43588 / DSM 3639 / JCM 9404 / F1) protein is Ornithine carbamoyltransferase.